A 197-amino-acid polypeptide reads, in one-letter code: MYAYLKGIITKITAKYIVLETNGIGYILHVANPYAYSGQVNQEAQIYVHQVVREDAHLLYGFRSEDEKKLFLSLISVSGIGPVSALAIIAADDNAGLVQAIETKNITYLTKFPKIGKKTAQQMVLDLEGKVVVAGDDLPAKVAVQASAENQELEEAMEAMLALGYKATELKKIKKFFEGTTDTAENYIKSALKMLVK.

The domain I stretch occupies residues 1 to 63; sequence MYAYLKGIIT…EDAHLLYGFR (63 aa). Positions 64–142 are domain II; sequence SEDEKKLFLS…VAGDDLPAKV (79 aa). The tract at residues 143–147 is flexible linker; sequence AVQAS. Residues 148–197 form a domain III region; the sequence is AENQELEEAMEAMLALGYKATELKKIKKFFEGTTDTAENYIKSALKMLVK.

The protein belongs to the RuvA family. In terms of assembly, homotetramer. Forms an RuvA(8)-RuvB(12)-Holliday junction (HJ) complex. HJ DNA is sandwiched between 2 RuvA tetramers; dsDNA enters through RuvA and exits via RuvB. An RuvB hexamer assembles on each DNA strand where it exits the tetramer. Each RuvB hexamer is contacted by two RuvA subunits (via domain III) on 2 adjacent RuvB subunits; this complex drives branch migration. In the full resolvosome a probable DNA-RuvA(4)-RuvB(12)-RuvC(2) complex forms which resolves the HJ.

It is found in the cytoplasm. Its function is as follows. The RuvA-RuvB-RuvC complex processes Holliday junction (HJ) DNA during genetic recombination and DNA repair, while the RuvA-RuvB complex plays an important role in the rescue of blocked DNA replication forks via replication fork reversal (RFR). RuvA specifically binds to HJ cruciform DNA, conferring on it an open structure. The RuvB hexamer acts as an ATP-dependent pump, pulling dsDNA into and through the RuvAB complex. HJ branch migration allows RuvC to scan DNA until it finds its consensus sequence, where it cleaves and resolves the cruciform DNA. The sequence is that of Holliday junction branch migration complex subunit RuvA from Streptococcus pneumoniae (strain Hungary19A-6).